The chain runs to 116 residues: Staphylococcal complement inhibitor (116 aa).

Residues 1–31 (MKIRKSILAGTLAIVLASPLVTNLDKNEAQA) form the signal peptide. Positions 62–79 (LATGSLNTYYKRTIKISG) are essential for activity.

Belongs to the SCIN family.

Its subcellular location is the secreted. Functionally, involved in countering the first line of host defense mechanisms. Efficiently inhibits opsonization, phagocytosis and killing of S.aureus by human neutrophils. Acts by binding and stabilizing human C3 convertases (C4b2a and C3bBb), leading to their inactivation. The convertases are no longer able to cleave complement C3, therefore preventing further C3b deposition on the bacterial surface and phagocytosis of the bacterium. Also prevents C5a-induced neutrophil responses. The protein is Staphylococcal complement inhibitor (scn) of Staphylococcus aureus (strain Mu50 / ATCC 700699).